The primary structure comprises 99 residues: Small integral membrane protein 14 (99 aa).

Topologically, residues 1–49 (MAEGGFDPCECVCSHEHAMRRLINLLRQSQSYCTDTECLQELPGPSGDN) are lumenal. The chain crosses the membrane as a helical span at residues 50–70 (GISVTMILVAWMVIALILFLL). Residues 71–99 (RPPNLRGSSLPGKPTSPHNGQDPPAPPVD) are Cytoplasmic-facing. A disordered region spans residues 78 to 99 (SSLPGKPTSPHNGQDPPAPPVD).

The protein resides in the endoplasmic reticulum membrane. The polypeptide is Small integral membrane protein 14 (SMIM14) (Homo sapiens (Human)).